Consider the following 554-residue polypeptide: Glutamine--tRNA ligase (554 aa).

Positions 34–44 (PEPNGYLHIGH) match the 'HIGH' region motif. Residues 35 to 37 (EPN) and 41 to 47 (HIGHAKS) each bind ATP. Positions 67 and 212 each coordinate L-glutamine. ATP-binding positions include Thr231, 261–262 (RL), and 269–271 (MSK). Residues 268-272 (VMSKR) carry the 'KMSKS' region motif. Positions 317–324 (TKQDNTIE) are interaction with tRNA.

Belongs to the class-I aminoacyl-tRNA synthetase family. Monomer.

Its subcellular location is the cytoplasm. It carries out the reaction tRNA(Gln) + L-glutamine + ATP = L-glutaminyl-tRNA(Gln) + AMP + diphosphate. This chain is Glutamine--tRNA ligase, found in Shigella boydii serotype 18 (strain CDC 3083-94 / BS512).